Consider the following 110-residue polypeptide: NADH-quinone oxidoreductase subunit K (110 aa).

The next 3 membrane-spanning stretches (helical) occupy residues 13–33 (VTHG…GIII), 38–58 (ILIL…NFLI), and 70–90 (VFVF…LAIV).

This sequence belongs to the complex I subunit 4L family. NDH-1 is composed of 14 different subunits. Subunits NuoA, H, J, K, L, M, N constitute the membrane sector of the complex.

The protein resides in the cell inner membrane. It catalyses the reaction a quinone + NADH + 5 H(+)(in) = a quinol + NAD(+) + 4 H(+)(out). In terms of biological role, NDH-1 shuttles electrons from NADH, via FMN and iron-sulfur (Fe-S) centers, to quinones in the respiratory chain. The immediate electron acceptor for the enzyme in this species is believed to be ubiquinone. Couples the redox reaction to proton translocation (for every two electrons transferred, four hydrogen ions are translocated across the cytoplasmic membrane), and thus conserves the redox energy in a proton gradient. The chain is NADH-quinone oxidoreductase subunit K from Francisella tularensis subsp. holarctica (strain FTNF002-00 / FTA).